The chain runs to 85 residues: Large ribosomal subunit protein bL27 (85 aa).

The protein belongs to the bacterial ribosomal protein bL27 family.

The chain is Large ribosomal subunit protein bL27 from Campylobacter fetus subsp. fetus (strain 82-40).